Reading from the N-terminus, the 225-residue chain is UPF0758 protein XOO0462 (225 aa).

Residues 102–224 (ALSDPPSVGR…PVSLAERGWL (123 aa)) form the MPN domain. Residues His173, His175, and Asp186 each contribute to the Zn(2+) site. A JAMM motif motif is present at residues 173 to 186 (HNHPSGNPEPSEAD).

This sequence belongs to the UPF0758 family.

The protein is UPF0758 protein XOO0462 of Xanthomonas oryzae pv. oryzae (strain MAFF 311018).